A 128-amino-acid chain; its full sequence is Holo-[acyl-carrier-protein] synthase (128 aa).

2 residues coordinate Mg(2+): D8 and E60.

This sequence belongs to the P-Pant transferase superfamily. AcpS family. Mg(2+) is required as a cofactor.

Its subcellular location is the cytoplasm. It carries out the reaction apo-[ACP] + CoA = holo-[ACP] + adenosine 3',5'-bisphosphate + H(+). Its function is as follows. Transfers the 4'-phosphopantetheine moiety from coenzyme A to a Ser of acyl-carrier-protein. The chain is Holo-[acyl-carrier-protein] synthase from Anaeromyxobacter sp. (strain K).